The following is a 275-amino-acid chain: NAD(P)H-hydrate epimerase (275 aa).

In terms of domain architecture, YjeF N-terminal spans 49–258 (AIKIDQELFS…ALAAKYELNL (210 aa)). Residue 102–106 (NNGGD) participates in (6S)-NADPHX binding. Residues Asn103 and Asp167 each coordinate K(+). (6S)-NADPHX is bound by residues 171 to 177 (GFSFKPP) and Asp200. Ser203 serves as a coordination point for K(+).

Belongs to the NnrE/AIBP family. K(+) is required as a cofactor.

The enzyme catalyses (6R)-NADHX = (6S)-NADHX. The catalysed reaction is (6R)-NADPHX = (6S)-NADPHX. Its function is as follows. Catalyzes the epimerization of the S- and R-forms of NAD(P)HX, a damaged form of NAD(P)H that is a result of enzymatic or heat-dependent hydration. This is a prerequisite for the S-specific NAD(P)H-hydrate dehydratase to allow the repair of both epimers of NAD(P)HX. This chain is NAD(P)H-hydrate epimerase, found in Ixodes scapularis (Black-legged tick).